Here is a 218-residue protein sequence, read N- to C-terminus: Octanoyltransferase (218 aa).

In terms of domain architecture, BPL/LPL catalytic spans 30 to 213 (GEIEDTLILV…YFSEVFNYDI (184 aa)). Substrate is bound by residues 75–82 (RGGDVTYH), 143–145 (AIG), and 156–158 (GFA). The Acyl-thioester intermediate role is filled by C174.

Belongs to the LipB family.

The protein resides in the cytoplasm. The catalysed reaction is octanoyl-[ACP] + L-lysyl-[protein] = N(6)-octanoyl-L-lysyl-[protein] + holo-[ACP] + H(+). Its pathway is protein modification; protein lipoylation via endogenous pathway; protein N(6)-(lipoyl)lysine from octanoyl-[acyl-carrier-protein]: step 1/2. Functionally, catalyzes the transfer of endogenously produced octanoic acid from octanoyl-acyl-carrier-protein onto the lipoyl domains of lipoate-dependent enzymes. Lipoyl-ACP can also act as a substrate although octanoyl-ACP is likely to be the physiological substrate. The sequence is that of Octanoyltransferase from Alkaliphilus metalliredigens (strain QYMF).